The chain runs to 115 residues: Large ribosomal subunit protein bL20 (115 aa).

The protein belongs to the bacterial ribosomal protein bL20 family.

Its function is as follows. Binds directly to 23S ribosomal RNA and is necessary for the in vitro assembly process of the 50S ribosomal subunit. It is not involved in the protein synthesizing functions of that subunit. This Prochlorococcus marinus subsp. pastoris (strain CCMP1986 / NIES-2087 / MED4) protein is Large ribosomal subunit protein bL20.